Here is an 874-residue protein sequence, read N- to C-terminus: Oxidation resistance protein 1 (874 aa).

Residues M1 to R89 form a disordered region. Residues R64–R89 show a composition bias toward basic and acidic residues. S91 bears the Phosphoserine mark. In terms of domain architecture, LysM spans I99–V142. T119 carries the post-translational modification Phosphothreonine. A compositionally biased stretch (low complexity) spans V151–E169. Positions V151 to I194 are disordered. S201, S202, and S204 each carry phosphoserine. A GRAM domain is found at E208 to K275. 3 positions are modified to phosphoserine: S294, S334, and S336. 2 disordered regions span residues C299 to V406 and F431 to A537. T341 is modified (phosphothreonine). Residue S346 is modified to Phosphoserine. Residues P347–K362 show a composition bias toward basic and acidic residues. A compositionally biased stretch (polar residues) spans S363 to T391. The segment covering S452–K466 has biased composition (basic and acidic residues). A Phosphoserine modification is found at S496. Over residues H510–Q527 the composition is skewed to polar residues. The tract at residues Q551 to T578 is mediates oxidative antimutator activity. In terms of domain architecture, TLDc spans E713–E874.

Belongs to the OXR1 family.

The protein resides in the mitochondrion. In terms of biological role, may be involved in protection from oxidative damage. The sequence is that of Oxidation resistance protein 1 (OXR1) from Homo sapiens (Human).